Consider the following 259-residue polypeptide: Indole-3-glycerol phosphate synthase (259 aa).

This sequence belongs to the TrpC family.

It carries out the reaction 1-(2-carboxyphenylamino)-1-deoxy-D-ribulose 5-phosphate + H(+) = (1S,2R)-1-C-(indol-3-yl)glycerol 3-phosphate + CO2 + H2O. It participates in amino-acid biosynthesis; L-tryptophan biosynthesis; L-tryptophan from chorismate: step 4/5. This is Indole-3-glycerol phosphate synthase from Dehalococcoides mccartyi (strain ATCC BAA-2100 / JCM 16839 / KCTC 5957 / BAV1).